The sequence spans 69 residues: MLLYIVIIVACIISKLVPNEYWAIHLFFIIMIFMVYMYEKLDIHQKYQFWNYTMSGLSGHNVQVICKCY.

Residues 1–15 (MLLYIVIIVACIISK) are Cytoplasmic-facing. The chain crosses the membrane as a helical span at residues 16–36 (LVPNEYWAIHLFFIIMIFMVY). Residues 37–69 (MYEKLDIHQKYQFWNYTMSGLSGHNVQVICKCY) are Extracellular-facing. Asparagine 51 is a glycosylation site (N-linked (GlcNAc...) asparagine; by host).

Belongs to the asfivirus X69R family.

The protein resides in the host membrane. This is an uncharacterized protein from Ornithodoros (relapsing fever ticks).